A 156-amino-acid chain; its full sequence is CASP-like protein 5C1 (156 aa).

Residues 1–21 (MENRERAGAGAVGSAGSLGLR) lie on the Cytoplasmic side of the membrane. Residues 22–42 (VGQAVFSSASLLFMSVGVEFF) traverse the membrane as a helical segment. Topologically, residues 43-46 (SYTA) are extracellular. Residues 47–67 (FCFLVTIMGLVIPWSCTLAMI) traverse the membrane as a helical segment. Over 68–81 (DVYSILVGCPLRVP) the chain is Cytoplasmic. Residues 82–102 (GVMVIVVIGDWVLAILSLAAA) form a helical membrane-spanning segment. The Extracellular segment spans residues 103–132 (SSSAAVIDLLLQFHGSHCSPRFCGRYQLSA). A helical membrane pass occupies residues 133-153 (MMAFLSWFLTAASSLFNLWFI). The Cytoplasmic segment spans residues 154–156 (ASR).

Belongs to the Casparian strip membrane proteins (CASP) family. Homodimer and heterodimers.

The protein localises to the cell membrane. The sequence is that of CASP-like protein 5C1 from Oryza sativa subsp. japonica (Rice).